Here is a 205-residue protein sequence, read N- to C-terminus: COP9 signalosome complex subunit 7 (205 aa).

A PCI domain is found at 1–135 (MEEKISQAID…QTLHVSWALE (135 aa)). The residue at position 183 (Ser-183) is a Phosphoserine.

It belongs to the CSN7/EIF3M family. CSN7 subfamily. Component of the COP9 signalosome (CSN) complex.

Its function is as follows. Component of the COP9 signalosome (CSN) complex that acts as an regulator of the ubiquitin (Ubl) conjugation pathway by mediating the deneddylation of the cullin subunit of SCF-type E3 ubiquitin-protein ligase complexes. The sequence is that of COP9 signalosome complex subunit 7 (csn71) from Schizosaccharomyces pombe (strain 972 / ATCC 24843) (Fission yeast).